We begin with the raw amino-acid sequence, 270 residues long: 3-methyl-2-oxobutanoate hydroxymethyltransferase (270 aa).

Positions 42 and 86 each coordinate Mg(2+). Residues 42 to 43 (DS), Asp-86, and Lys-116 contribute to the 3-methyl-2-oxobutanoate site. Glu-118 is a Mg(2+) binding site. Glu-185 acts as the Proton acceptor in catalysis.

It belongs to the PanB family. In terms of assembly, homodecamer; pentamer of dimers. Requires Mg(2+) as cofactor.

The protein localises to the cytoplasm. The enzyme catalyses 3-methyl-2-oxobutanoate + (6R)-5,10-methylene-5,6,7,8-tetrahydrofolate + H2O = 2-dehydropantoate + (6S)-5,6,7,8-tetrahydrofolate. It participates in cofactor biosynthesis; (R)-pantothenate biosynthesis; (R)-pantoate from 3-methyl-2-oxobutanoate: step 1/2. Functionally, catalyzes the reversible reaction in which hydroxymethyl group from 5,10-methylenetetrahydrofolate is transferred onto alpha-ketoisovalerate to form ketopantoate. In Synechococcus sp. (strain CC9902), this protein is 3-methyl-2-oxobutanoate hydroxymethyltransferase.